Reading from the N-terminus, the 108-residue chain is Protein S100-A15A (108 aa).

Residues 53–88 (KEPYYITELFQAADKNKDNQICFDEFLYILGKLVKD) form the EF-hand domain. 5 residues coordinate Ca(2+): D66, N68, D70, Q72, and E77.

This sequence belongs to the S-100 family.

The sequence is that of Protein S100-A15A (S100A15A) from Pongo abelii (Sumatran orangutan).